Reading from the N-terminus, the 205-residue chain is Large ribosomal subunit protein bL25 (205 aa).

A disordered region spans residues 185–205; the sequence is PAGAVSEAAEGGEAAGETPAA. Residues 186-205 are compositionally biased toward low complexity; sequence AGAVSEAAEGGEAAGETPAA.

The protein belongs to the bacterial ribosomal protein bL25 family. CTC subfamily. Part of the 50S ribosomal subunit; part of the 5S rRNA/L5/L18/L25 subcomplex. Contacts the 5S rRNA. Binds to the 5S rRNA independently of L5 and L18.

Functionally, this is one of the proteins that binds to the 5S RNA in the ribosome where it forms part of the central protuberance. This is Large ribosomal subunit protein bL25 from Cupriavidus taiwanensis (strain DSM 17343 / BCRC 17206 / CCUG 44338 / CIP 107171 / LMG 19424 / R1) (Ralstonia taiwanensis (strain LMG 19424)).